Consider the following 101-residue polypeptide: MSQITEEQVKHVALLSKLEFSENEVKSFTVTFGKIIDMVEMLDEVDTDGVPFTMNVADNLNFMREDVAEKGLDREKLMAAVPEKEDGFIKVPAMLSDGGDA.

This sequence belongs to the GatC family. As to quaternary structure, heterotrimer of A, B and C subunits.

The catalysed reaction is L-glutamyl-tRNA(Gln) + L-glutamine + ATP + H2O = L-glutaminyl-tRNA(Gln) + L-glutamate + ADP + phosphate + H(+). It catalyses the reaction L-aspartyl-tRNA(Asn) + L-glutamine + ATP + H2O = L-asparaginyl-tRNA(Asn) + L-glutamate + ADP + phosphate + 2 H(+). Functionally, allows the formation of correctly charged Asn-tRNA(Asn) or Gln-tRNA(Gln) through the transamidation of misacylated Asp-tRNA(Asn) or Glu-tRNA(Gln) in organisms which lack either or both of asparaginyl-tRNA or glutaminyl-tRNA synthetases. The reaction takes place in the presence of glutamine and ATP through an activated phospho-Asp-tRNA(Asn) or phospho-Glu-tRNA(Gln). This chain is Aspartyl/glutamyl-tRNA(Asn/Gln) amidotransferase subunit C, found in Lactococcus lactis subsp. cremoris (strain MG1363).